A 474-amino-acid chain; its full sequence is Trigger factor (474 aa).

Residues 165–250 (GDRVTIDYLG…VKTVSKPDEL (86 aa)) enclose the PPIase FKBP-type domain. The span at 451–467 (VKKKTASDNKKSNEIKK) shows a compositional bias: basic and acidic residues. Positions 451–474 (VKKKTASDNKKSNEIKKKSTMKKV) are disordered.

The protein belongs to the FKBP-type PPIase family. Tig subfamily.

The protein resides in the cytoplasm. It carries out the reaction [protein]-peptidylproline (omega=180) = [protein]-peptidylproline (omega=0). Functionally, involved in protein export. Acts as a chaperone by maintaining the newly synthesized protein in an open conformation. Functions as a peptidyl-prolyl cis-trans isomerase. This Bartonella bacilliformis (strain ATCC 35685 / KC583 / Herrer 020/F12,63) protein is Trigger factor.